The primary structure comprises 342 residues: L-threonine 3-dehydrogenase (342 aa).

C38 is a binding site for Zn(2+). Residues T40 and H43 each act as charge relay system in the active site. Residues H63, E64, C93, C96, C99, and C107 each contribute to the Zn(2+) site. Residues I175, D195, R200, 262-264, and 286-287 each bind NAD(+); these read LGL and IY.

This sequence belongs to the zinc-containing alcohol dehydrogenase family. In terms of assembly, homotetramer. Requires Zn(2+) as cofactor.

It is found in the cytoplasm. The enzyme catalyses L-threonine + NAD(+) = (2S)-2-amino-3-oxobutanoate + NADH + H(+). It functions in the pathway amino-acid degradation; L-threonine degradation via oxydo-reductase pathway; glycine from L-threonine: step 1/2. Its function is as follows. Catalyzes the NAD(+)-dependent oxidation of L-threonine to 2-amino-3-ketobutyrate. In Streptomyces avermitilis (strain ATCC 31267 / DSM 46492 / JCM 5070 / NBRC 14893 / NCIMB 12804 / NRRL 8165 / MA-4680), this protein is L-threonine 3-dehydrogenase.